A 1059-amino-acid polypeptide reads, in one-letter code: Carbamoyl phosphate synthase large chain (1059 aa).

A carboxyphosphate synthetic domain region spans residues 1 to 401; that stretch reads MPKRSDIKKI…SLLKACRSLE (401 aa). Residues Arg-129, Arg-169, Gly-175, Gly-176, Arg-208, Ile-210, Glu-215, Gly-241, Ile-242, His-243, Gln-284, and Glu-298 each coordinate ATP. The ATP-grasp 1 domain occupies 133–327; sequence KQLMEELEQP…IAKLAAKIAV (195 aa). Mg(2+) contacts are provided by Gln-284, Glu-298, and Asn-300. 3 residues coordinate Mn(2+): Gln-284, Glu-298, and Asn-300. An oligomerization domain region spans residues 402 to 546; sequence IGVYHNEMSE…YSTYEWENES (145 aa). The tract at residues 547 to 929 is carbamoyl phosphate synthetic domain; it reads IKSDKESVIV…ALYKAFEASY (383 aa). Positions 671–861 constitute an ATP-grasp 2 domain; that stretch reads EQALKDLDIP…MAQVATNLIL (191 aa). ATP is bound by residues Arg-707, Ser-746, Ile-748, Glu-752, Gly-777, Val-778, His-779, Ser-780, Gln-820, and Glu-832. Gln-820, Glu-832, and Asn-834 together coordinate Mg(2+). Residues Gln-820, Glu-832, and Asn-834 each contribute to the Mn(2+) site. An MGS-like domain is found at 930–1059; that stretch reads LHLPTFGNVI…ESRSFTTEAI (130 aa). Residues 930–1059 form an allosteric domain region; that stretch reads LHLPTFGNVI…ESRSFTTEAI (130 aa).

This sequence belongs to the CarB family. Composed of two chains; the small (or glutamine) chain promotes the hydrolysis of glutamine to ammonia, which is used by the large (or ammonia) chain to synthesize carbamoyl phosphate. Tetramer of heterodimers (alpha,beta)4. The cofactor is Mg(2+). Mn(2+) is required as a cofactor.

It carries out the reaction hydrogencarbonate + L-glutamine + 2 ATP + H2O = carbamoyl phosphate + L-glutamate + 2 ADP + phosphate + 2 H(+). It catalyses the reaction hydrogencarbonate + NH4(+) + 2 ATP = carbamoyl phosphate + 2 ADP + phosphate + 2 H(+). It functions in the pathway amino-acid biosynthesis; L-arginine biosynthesis; carbamoyl phosphate from bicarbonate: step 1/1. Its pathway is pyrimidine metabolism; UMP biosynthesis via de novo pathway; (S)-dihydroorotate from bicarbonate: step 1/3. In terms of biological role, large subunit of the glutamine-dependent carbamoyl phosphate synthetase (CPSase). CPSase catalyzes the formation of carbamoyl phosphate from the ammonia moiety of glutamine, carbonate, and phosphate donated by ATP, constituting the first step of 2 biosynthetic pathways, one leading to arginine and/or urea and the other to pyrimidine nucleotides. The large subunit (synthetase) binds the substrates ammonia (free or transferred from glutamine from the small subunit), hydrogencarbonate and ATP and carries out an ATP-coupled ligase reaction, activating hydrogencarbonate by forming carboxy phosphate which reacts with ammonia to form carbamoyl phosphate. The polypeptide is Carbamoyl phosphate synthase large chain (Streptococcus thermophilus (strain ATCC BAA-250 / LMG 18311)).